Consider the following 268-residue polypeptide: Lipopolysaccharide core heptose(I) kinase WaaP (268 aa).

Residues Tyr30, Tyr48, and Tyr98 each carry the phosphotyrosine; by autocatalysis modification. Asp163 is an active-site residue. A phosphotyrosine; by autocatalysis mark is found at Tyr165, Tyr211, Tyr231, Tyr258, and Tyr264.

Belongs to the protein kinase superfamily. KdkA/RfaP family. As to quaternary structure, interacts with acyl-AcpP. The WaaP hydrophobic channel can accommodate acyl chains of different lengths, but myristyl-ACP is likely its physiological binding partner. The cofactor is Mg(2+).

It localises to the cytoplasm. It catalyses the reaction an L-alpha-D-Hep-(1-&gt;3)-L-alpha-D-Hep-(1-&gt;5)-[alpha-Kdo-(2-&gt;4)]-alpha-Kdo-(2-&gt;6)-lipid A + ATP = an L-alpha-D-Hep-(1-&gt;3)-4-O-phospho-L-alpha-D-Hep-(1-&gt;5)-[alpha-Kdo-(2-&gt;4)]-alpha-Kdo-(2-&gt;6)-lipid A + ADP + H(+). The catalysed reaction is L-tyrosyl-[protein] + ATP = O-phospho-L-tyrosyl-[protein] + ADP + H(+). The protein operates within bacterial outer membrane biogenesis; LPS core biosynthesis. Its activity is regulated as follows. Acylated-acyl carrier protein (acyl-ACP) acts as a very tightly bound cofactor necessary for the production and stability of active WaaP kinase. Kinase involved in the biosynthesis of the core oligosaccharide region of lipopolysaccharide (LPS). Catalyzes the phosphorylation of heptose I (HepI), the first heptose added to the Kdo2-lipid A module. Also has protein-tyrosine kinase activity: autophosphorylates on all Tyr residues; in vitro can phosphorylate poly(Glu,Tyr). The chain is Lipopolysaccharide core heptose(I) kinase WaaP from Pseudomonas aeruginosa (strain ATCC 15692 / DSM 22644 / CIP 104116 / JCM 14847 / LMG 12228 / 1C / PRS 101 / PAO1).